The sequence spans 58 residues: uncharacterized protein (58 aa).

A helical transmembrane segment spans residues 18 to 38 (WLMIVLLFCSTGMVFLATILE).

The protein resides in the membrane. This is an uncharacterized protein from Saccharomyces cerevisiae (strain ATCC 204508 / S288c) (Baker's yeast).